Here is a 636-residue protein sequence, read N- to C-terminus: Chaperone protein HtpG (636 aa).

An a; substrate-binding region spans residues Met1–Arg342. The interval Glu343–Lys558 is b. The c stretch occupies residues Met559 to Leu636.

Belongs to the heat shock protein 90 family. In terms of assembly, homodimer.

The protein resides in the cytoplasm. Its function is as follows. Molecular chaperone. Has ATPase activity. The chain is Chaperone protein HtpG from Salinispora arenicola (strain CNS-205).